Reading from the N-terminus, the 188-residue chain is Elongation factor P (188 aa).

Position 34 is an N6-(3,6-diaminohexanoyl)-5-hydroxylysine (Lys-34).

Belongs to the elongation factor P family. May be beta-lysylated on the epsilon-amino group of Lys-34 by the combined action of EpmA and EpmB, and then hydroxylated on the C5 position of the same residue by EpmC (if this protein is present). Lysylation is critical for the stimulatory effect of EF-P on peptide-bond formation. The lysylation moiety may extend toward the peptidyltransferase center and stabilize the terminal 3-CCA end of the tRNA. Hydroxylation of the C5 position on Lys-34 may allow additional potential stabilizing hydrogen-bond interactions with the P-tRNA.

The protein resides in the cytoplasm. It functions in the pathway protein biosynthesis; polypeptide chain elongation. In terms of biological role, involved in peptide bond synthesis. Alleviates ribosome stalling that occurs when 3 or more consecutive Pro residues or the sequence PPG is present in a protein, possibly by augmenting the peptidyl transferase activity of the ribosome. Modification of Lys-34 is required for alleviation. The sequence is that of Elongation factor P from Erwinia tasmaniensis (strain DSM 17950 / CFBP 7177 / CIP 109463 / NCPPB 4357 / Et1/99).